The sequence spans 589 residues: Coiled-coil domain-containing protein 22 homolog (589 aa).

Coiled coils occupy residues lysine 287 to lysine 426 and cysteine 523 to glutamine 589. The interval glutamate 568–glutamine 589 is disordered. A compositionally biased stretch (basic and acidic residues) spans glutamine 574 to glutamine 589.

This sequence belongs to the CCDC22 family.

This chain is Coiled-coil domain-containing protein 22 homolog, found in Aedes aegypti (Yellowfever mosquito).